Here is a 62-residue protein sequence, read N- to C-terminus: DNA-directed RNA polymerase subunit Rpo10 (62 aa).

Positions 6, 9, 43, and 44 each coordinate Zn(2+).

The protein belongs to the archaeal Rpo10/eukaryotic RPB10 RNA polymerase subunit family. In terms of assembly, part of the RNA polymerase complex. It depends on Zn(2+) as a cofactor.

Its subcellular location is the cytoplasm. The enzyme catalyses RNA(n) + a ribonucleoside 5'-triphosphate = RNA(n+1) + diphosphate. Functionally, DNA-dependent RNA polymerase (RNAP) catalyzes the transcription of DNA into RNA using the four ribonucleoside triphosphates as substrates. This Methanococcoides burtonii (strain DSM 6242 / NBRC 107633 / OCM 468 / ACE-M) protein is DNA-directed RNA polymerase subunit Rpo10.